A 215-amino-acid polypeptide reads, in one-letter code: Calmodulin-like protein 5 (215 aa).

Residues 38-61 (KNSPPSPSTMLPSPSSSSAPTKRI) are disordered. Over residues 45-57 (STMLPSPSSSSAP) the composition is skewed to low complexity. EF-hand domains follow at residues 61 to 96 (IDPS…LGIY), 97 to 132 (IPDK…IVDE), 139 to 174 (TEEE…LGLK), and 177 to 212 (KTLD…GGFS). 19 residues coordinate Ca(2+): D74, N76, D78, R80, E85, D110, N112, D114, C116, E121, D152, D154, D156, E163, D190, D192, D194, R196, and E201.

It belongs to the calmodulin family.

Its function is as follows. Potential calcium sensor. In Arabidopsis thaliana (Mouse-ear cress), this protein is Calmodulin-like protein 5 (CML5).